The primary structure comprises 154 residues: Putative thioredoxin H10 (154 aa).

One can recognise a Thioredoxin domain in the interval 24 to 148 (NNNNSYGQTR…LQKKTAAAAD (125 aa)). Catalysis depends on nucleophile residues C74 and C77. Cysteines 74 and 77 form a disulfide.

This sequence belongs to the thioredoxin family.

The protein resides in the cytoplasm. Probable thiol-disulfide oxidoreductase that may be involved in the redox regulation of a number of cytosolic enzymes. This chain is Putative thioredoxin H10, found in Arabidopsis thaliana (Mouse-ear cress).